The primary structure comprises 684 residues: Translation factor GUF1 homolog, mitochondrial (684 aa).

A tr-type G domain is found at 82–270; the sequence is HLIRNFSIIA…AVIERIPQPK (189 aa). Residues 91-98, 163-167, and 217-220 contribute to the GTP site; these read AHVDHGKS, DTPGH, and NKID.

The protein belongs to the TRAFAC class translation factor GTPase superfamily. Classic translation factor GTPase family. LepA subfamily.

The protein localises to the mitochondrion inner membrane. The enzyme catalyses GTP + H2O = GDP + phosphate + H(+). Its function is as follows. Promotes mitochondrial protein synthesis. May act as a fidelity factor of the translation reaction, by catalyzing a one-codon backward translocation of tRNAs on improperly translocated ribosomes. Binds to mitochondrial ribosomes in a GTP-dependent manner. This Physcomitrium patens (Spreading-leaved earth moss) protein is Translation factor GUF1 homolog, mitochondrial.